A 485-amino-acid polypeptide reads, in one-letter code: Glutamyl-tRNA(Gln) amidotransferase subunit A (485 aa).

Active-site charge relay system residues include Lys-78 and Ser-153. Residue Ser-177 is the Acyl-ester intermediate of the active site.

The protein belongs to the amidase family. GatA subfamily. As to quaternary structure, heterotrimer of A, B and C subunits.

The catalysed reaction is L-glutamyl-tRNA(Gln) + L-glutamine + ATP + H2O = L-glutaminyl-tRNA(Gln) + L-glutamate + ADP + phosphate + H(+). In terms of biological role, allows the formation of correctly charged Gln-tRNA(Gln) through the transamidation of misacylated Glu-tRNA(Gln) in organisms which lack glutaminyl-tRNA synthetase. The reaction takes place in the presence of glutamine and ATP through an activated gamma-phospho-Glu-tRNA(Gln). In Bacillus mycoides (strain KBAB4) (Bacillus weihenstephanensis), this protein is Glutamyl-tRNA(Gln) amidotransferase subunit A.